The chain runs to 210 residues: Outer-membrane lipoprotein LolB (210 aa).

The first 18 residues, 1–18, serve as a signal peptide directing secretion; the sequence is MKKFTKILSLSTLLFLAG. Cys19 is lipidated: N-palmitoyl cysteine. Residue Cys19 is the site of S-diacylglycerol cysteine attachment.

This sequence belongs to the LolB family. Monomer.

It is found in the cell outer membrane. Functionally, plays a critical role in the incorporation of lipoproteins in the outer membrane after they are released by the LolA protein. This is Outer-membrane lipoprotein LolB from Actinobacillus pleuropneumoniae serotype 7 (strain AP76).